Reading from the N-terminus, the 1057-residue chain is Probable E3 ubiquitin-protein ligase HERC4 (1057 aa).

RCC1 repeat units follow at residues M1 to D51, D52 to D101, K102 to K154, S156 to L207, S208 to K259, G261 to P311, and S313 to F368. One can recognise an HECT domain in the interval K730 to I1057. Catalysis depends on C1025, which acts as the Glycyl thioester intermediate.

As to expression, expressed in brain and testis and detected in heart and placenta.

It localises to the cytoplasm. It is found in the cytosol. The catalysed reaction is S-ubiquitinyl-[E2 ubiquitin-conjugating enzyme]-L-cysteine + [acceptor protein]-L-lysine = [E2 ubiquitin-conjugating enzyme]-L-cysteine + N(6)-ubiquitinyl-[acceptor protein]-L-lysine.. It functions in the pathway protein modification; protein ubiquitination. Functionally, probable E3 ubiquitin-protein ligase involved in either protein trafficking or in the distribution of cellular structures. Required for spermatozoon maturation and fertility, and for the removal of the cytoplasmic droplet of the spermatozoon. E3 ubiquitin-protein ligases accept ubiquitin from an E2 ubiquitin-conjugating enzyme in the form of a thioester and then directly transfer it to targeted substrates. The chain is Probable E3 ubiquitin-protein ligase HERC4 (HERC4) from Homo sapiens (Human).